The chain runs to 298 residues: Serine/threonine-protein kinase 1 (298 aa).

Residues 38 to 276 (FIATRPMFEG…FKSLVSHPWF (239 aa)) enclose the Protein kinase domain. Residues 45-53 (FEGGRNNVF) and K65 contribute to the ATP site. D152 (proton acceptor) is an active-site residue.

This sequence belongs to the protein kinase superfamily. Ser/Thr protein kinase family.

It localises to the virion. The protein resides in the host cytoplasm. The enzyme catalyses L-seryl-[protein] + ATP = O-phospho-L-seryl-[protein] + ADP + H(+). It carries out the reaction L-threonyl-[protein] + ATP = O-phospho-L-threonyl-[protein] + ADP + H(+). Essential for viral replication. It may mediate the virus progression through DNA replication. The protein is Serine/threonine-protein kinase 1 of African swine fever virus (strain Badajoz 1971 Vero-adapted) (Ba71V).